Reading from the N-terminus, the 106-residue chain is Large ribosomal subunit protein eL42Q (106 aa).

The protein belongs to the eukaryotic ribosomal protein eL42 family.

The protein is Large ribosomal subunit protein eL42Q (RIM-C) of Candida maltosa (Yeast).